A 927-amino-acid chain; its full sequence is Roc-COR-CHAT protease (927 aa).

4 LRR repeats span residues 38–61 (AGQV…TEAQ), 83–107 (LPHL…GFRS), 109–125 (QQVY…VFEG), and 127–151 (CPAL…GFRA). Residues 152–170 (LKYIYATNNVLQKITFNRS) form an LRR 5 region. LRR repeat units follow at residues 171–194 (MRLL…LSEI) and 195–217 (ETME…IWDR). A COR domain is found at 436–623 (EWLGVKEDLN…ELRWKKGVVL (188 aa)). Active-site residues include H796 and C840.

Functionally, a dedicated protease for gasdermin bGSDM; cleaves the bGSDM precursor, releasing the pore-forming moiety, which integrates into the membrane and triggers cell death. Probably involved in defense against bacteriophages. Expression of bGSDM and this neighboring protease is highly toxic in E.coli. Cells expressing the gene pair stop dividing and lose membrane integrity. Both proteins are required to kill E.coli. The bGSDM recognition site is larger than the 8 residues surrounding the cleavage site; replacement of the endogenous recognition site by the Runella site (NRVLGENM) in a number of other bGSDMs is not sufficient for them to be cleaved. This is Roc-COR-CHAT protease from Runella zeae (strain ATCC BAA-293 / DSM 19591 / LMG 21438 / NS12).